The chain runs to 288 residues: Glucose-1-phosphate thymidylyltransferase (288 aa).

Gly-8 lines the dTDP-alpha-D-glucose pocket. 9 residues coordinate dTTP: Gly-8, Gly-11, Thr-12, Arg-13, Lys-23, Gln-24, Gln-80, Gly-85, and Asp-108. Residues Lys-23, Gln-24, Gln-80, Gly-85, Asp-108, Asn-109, Gly-143, Glu-158, Lys-159, Val-169, and Asp-222 each coordinate dTDP-alpha-D-glucose. Asp-108 lines the Mg(2+) pocket. Asp-222 serves as a coordination point for Mg(2+).

Belongs to the glucose-1-phosphate thymidylyltransferase family. It depends on Mg(2+) as a cofactor.

It catalyses the reaction dTTP + alpha-D-glucose 1-phosphate + H(+) = dTDP-alpha-D-glucose + diphosphate. It functions in the pathway carbohydrate biosynthesis; dTDP-L-rhamnose biosynthesis. Catalyzes the conversion of glucose-1-phosphate and dTTP to dTDP-glucose and pyrophosphate. Involved in the biosynthesis of the dTDP-L-rhamnose which is a component of the critical linker, D-N-acetylglucosamine-L-rhamnose disaccharide, which connects the galactan region of arabinogalactan to peptidoglycan via a phosphodiester linkage. This Mycolicibacterium smegmatis (strain ATCC 700084 / mc(2)155) (Mycobacterium smegmatis) protein is Glucose-1-phosphate thymidylyltransferase (rmlA).